The primary structure comprises 420 residues: Serine hydroxymethyltransferase (420 aa).

(6S)-5,6,7,8-tetrahydrofolate is bound by residues Leu-121 and 125–127 (GHL). An N6-(pyridoxal phosphate)lysine modification is found at Lys-230. (6S)-5,6,7,8-tetrahydrofolate is bound by residues Glu-246 and 354–356 (SPF).

Belongs to the SHMT family. Homodimer. Pyridoxal 5'-phosphate is required as a cofactor.

It localises to the cytoplasm. It catalyses the reaction (6R)-5,10-methylene-5,6,7,8-tetrahydrofolate + glycine + H2O = (6S)-5,6,7,8-tetrahydrofolate + L-serine. Its pathway is one-carbon metabolism; tetrahydrofolate interconversion. The protein operates within amino-acid biosynthesis; glycine biosynthesis; glycine from L-serine: step 1/1. Its function is as follows. Catalyzes the reversible interconversion of serine and glycine with tetrahydrofolate (THF) serving as the one-carbon carrier. This reaction serves as the major source of one-carbon groups required for the biosynthesis of purines, thymidylate, methionine, and other important biomolecules. Also exhibits THF-independent aldolase activity toward beta-hydroxyamino acids, producing glycine and aldehydes, via a retro-aldol mechanism. In Rickettsia rickettsii (strain Iowa), this protein is Serine hydroxymethyltransferase.